Consider the following 430-residue polypeptide: Trigger factor (430 aa).

Positions 157–242 (GDLVALETWS…AVEVSEPVLP (86 aa)) constitute a PPIase FKBP-type domain.

This sequence belongs to the FKBP-type PPIase family. Tig subfamily.

The protein resides in the cytoplasm. The enzyme catalyses [protein]-peptidylproline (omega=180) = [protein]-peptidylproline (omega=0). Functionally, involved in protein export. Acts as a chaperone by maintaining the newly synthesized protein in an open conformation. Functions as a peptidyl-prolyl cis-trans isomerase. In Xanthomonas campestris pv. campestris (strain B100), this protein is Trigger factor.